The sequence spans 222 residues: MAGKPVLHYFNARGRMECIRWLLAAAGVEFEEKFIQSPEDLEKLKKDGNLMFDQVPMVEIDGMKLVQTRAILNYIATKYDLYGKDMKERALIDMYTEGILDLTEMIGQLVLCPPDQREAKTALAKDRTKNRYLPAFEKVLKSHGQDYLVGNRLTRVDVHLLELLLYVEELDASLLTPFPLLKAFKSRISSLPNVKKFLHPGSQRKPPLDAKQIEEARKVFKF.

Ala-2 carries the N-acetylalanine modification. The 81-residue stretch at 3–83 (GKPVLHYFNA…YIATKYDLYG (81 aa)) folds into the GST N-terminal domain. At Lys-4 the chain carries N6-succinyllysine. Glutathione contacts are provided by residues Tyr-9, Lys-45, 54-55 (QV), and 67-68 (QT). The 124-residue stretch at 85 to 208 (DMKERALIDM…HPGSQRKPPL (124 aa)) folds into the GST C-terminal domain.

The protein belongs to the GST superfamily. Alpha family. Homodimer. Heterodimer of GSTA1 and GSTA2. As to expression, expressed in the kidney.

It catalyses the reaction RX + glutathione = an S-substituted glutathione + a halide anion + H(+). Functionally, catalyzes the conjugation of glutathione to a large variety of electrophilic compounds. The sequence is that of Glutathione S-transferase A2 (Gsta2) from Mus musculus (Mouse).